Reading from the N-terminus, the 283-residue chain is MMTHWPSPAKLNLFLYITGQRADGYHTLQTLFQFLDYGDTIGITPRGDGEIHLLTPVEGVENDDNLIVRAARLLMKTASAHGRLPAGSGADISIEKRLPMGGGLGGGSSNAATVLVALNHLWQCGLSVDELAETGLTLGADVPVFVRGHAAFAEGVGEILTPVDPPEKWYLVAHPGVSIPTPVIFKDPELPRNTPKRSIETLLKCEFGNDCEVIARKRFREVDAALSWLLEYAPSRLTGTGACVFAEFDTESAARQVLKQAPEWLNAFVAKGVNLSPLQKAML.

The active site involves Lys10. 99–109 contributes to the ATP binding site; the sequence is PMGGGLGGGSS. Residue Asp141 is part of the active site.

The protein belongs to the GHMP kinase family. IspE subfamily. As to quaternary structure, homodimer.

It carries out the reaction 4-CDP-2-C-methyl-D-erythritol + ATP = 4-CDP-2-C-methyl-D-erythritol 2-phosphate + ADP + H(+). It functions in the pathway isoprenoid biosynthesis; isopentenyl diphosphate biosynthesis via DXP pathway; isopentenyl diphosphate from 1-deoxy-D-xylulose 5-phosphate: step 3/6. Its function is as follows. Catalyzes the phosphorylation of the position 2 hydroxy group of 4-diphosphocytidyl-2C-methyl-D-erythritol. In Citrobacter koseri (strain ATCC BAA-895 / CDC 4225-83 / SGSC4696), this protein is 4-diphosphocytidyl-2-C-methyl-D-erythritol kinase.